A 425-amino-acid polypeptide reads, in one-letter code: MATAAQPSLELALELMSKVPLIGNISQSTHKIPIQCTGLTREQDGHNDWMHMIRAYYDFQVDDRFQPTKDLAGHVDLKRLVQGRAGAVFWSVYVECPKGENDFSDAVHHASMRDTFQQIDLLQRIMELYSDRMEMAHKADDVMRIFRSGKCASLMGAEGLHQLGNSSSVLRIFHRLGVRYVTLAHAKNNLYVDSATSEAPIHHGLSPQGRDMVREMNRIGMIVDLSHVSEKAMVDALDVSLAPVIFSHSSAYALVPHVRNVPDHVLDRLKQNRGIIMISFIPWLTNKDPEKATVENVVDHVLHVGNRIGFDHLGLGSDFDGMPSHVQGLEDVSKYPNVVAAMLQRGISTENVEKIMGMNVIRVLREVEDVAASQKGLLPVLEDAVPQLWDDGIRAYVKKLYPHAEHDRTGASETTTVDKAIEKDV.

Zn(2+) contacts are provided by histidine 46, aspartate 48, and glutamate 158. The substrate site is built by histidine 185, arginine 259, and aspartate 318.

The protein belongs to the metallo-dependent hydrolases superfamily. Peptidase M19 family. It depends on Zn(2+) as a cofactor.

It catalyses the reaction an L-aminoacyl-L-amino acid + H2O = 2 an L-alpha-amino acid. Its function is as follows. Dipeptidase; part of the gene cluster that mediates the biosynthesis of an unusual class of epipolythiodioxopiperazines (ETPs) lacking the reactive thiol group important for toxicity. Firstly, L-tyrosine is prenylated by tcpD, before undergoing condensation with L-glycine in a reaction catalyzed by the NRPS tcpP leading to the diketopiperazine (DKP) backbone. Afterwards the alpha-carbon of tyrosine is oxidized by the cytochrome P450 tcpC to form a hydroxyl group. However, in contrast other ETP biosynthesis pathways studied so far, tcpC is not able to bishydroxylate the DKP at both alpha-carbon positions, but hydroxylates the alpha-carbon of the tyrosine part and the nitrogen of the glycine part. The next steps involve an alpha,beta-elimination reaction catalyzed by tcpI, a methylation by the methyltransferase tcpN the action of the four enzyme cascade tcpG/K/J/I. Due to a dysfunctional cytochrome P450 monooxygenase tcpC, the pathway leads to the biosynthesis of probable non-toxic metabolites lacking the reactive thiol group. The protein is Dipeptidase tcpJ of Claviceps purpurea (strain 20.1) (Ergot fungus).